The following is a 745-amino-acid chain: F-box only protein 30 (745 aa).

The TRAF-type zinc finger occupies glutamate 48 to asparagine 109. 2 disordered regions span residues asparagine 211–glutamine 231 and glycine 305–threonine 324. The span at glutamine 222–glutamine 231 shows a compositional bias: basic and acidic residues. A compositionally biased stretch (polar residues) spans glycine 305–asparagine 314. The F-box domain occupies asparagine 610 to isoleucine 658.

Part of a SCF (SKP1-cullin-F-box) protein ligase complex. Interacts with SKP1, CUL1 and RBX1/ROC1. In terms of processing, auto-ubiquitinated. May be neddylated. Neddylation may be required for E3 ligase activity.

The protein operates within protein modification; protein ubiquitination. In terms of biological role, substrate-recognition component of the SCF (SKP1-CUL1-F-box protein)-type E3 ubiquitin ligase complex. Required for muscle atrophy following denervation. This is F-box only protein 30 (FBXO30) from Homo sapiens (Human).